We begin with the raw amino-acid sequence, 153 residues long: 6,7-dimethyl-8-ribityllumazine synthase (153 aa).

5-amino-6-(D-ribitylamino)uracil is bound by residues F22, 56–58 (AFE), and 80–82 (AVI). 85–86 (GT) contributes to the (2S)-2-hydroxy-3-oxobutyl phosphate binding site. H88 functions as the Proton donor in the catalytic mechanism. Residue F113 participates in 5-amino-6-(D-ribitylamino)uracil binding. R127 is a binding site for (2S)-2-hydroxy-3-oxobutyl phosphate.

This sequence belongs to the DMRL synthase family. In terms of assembly, forms an icosahedral capsid composed of 60 subunits, arranged as a dodecamer of pentamers.

The catalysed reaction is (2S)-2-hydroxy-3-oxobutyl phosphate + 5-amino-6-(D-ribitylamino)uracil = 6,7-dimethyl-8-(1-D-ribityl)lumazine + phosphate + 2 H2O + H(+). It participates in cofactor biosynthesis; riboflavin biosynthesis; riboflavin from 2-hydroxy-3-oxobutyl phosphate and 5-amino-6-(D-ribitylamino)uracil: step 1/2. Its function is as follows. Catalyzes the formation of 6,7-dimethyl-8-ribityllumazine by condensation of 5-amino-6-(D-ribitylamino)uracil with 3,4-dihydroxy-2-butanone 4-phosphate. This is the penultimate step in the biosynthesis of riboflavin. The chain is 6,7-dimethyl-8-ribityllumazine synthase from Hydrogenovibrio crunogenus (strain DSM 25203 / XCL-2) (Thiomicrospira crunogena).